Reading from the N-terminus, the 129-residue chain is MQNSSLLKPPSIKAQHKIAKRRAVRRRRIDLNCGCSIFLHINCADNGFTHRGEHHCSSGREFRFYLGGSKSPIFQDTTRRGPVVHQNQDLPHPSPVQPQPTESIGSPQSLLQLPSLDDFDESFWADIFK.

Positions 13–28 (KAQHKIAKRRAVRRRR) match the Nuclear localization signal motif. A zinc finger lies at 33–50 (CGCSIFLHINCADNGFTH). The tract at residues 73 to 109 (IFQDTTRRGPVVHQNQDLPHPSPVQPQPTESIGSPQS) is disordered. Ser109 carries the phosphoserine; by host modification. The segment at 115 to 129 (SLDDFDESFWADIFK) is transactivation.

It belongs to the geminiviridae transcriptional activator protein family. Monomer. Homodimer. Homooligomer. Self-interaction correlates with nuclear localization and efficient activation of transcription. Monomers suppress local silencing by interacting with and inactivating host adenosine kinase 2 (ADK2) in the cytoplasm. Interacts with and inhibits host SNF1 kinase. Binds to ssDNA. Post-translationally, phosphorylated at Ser-109 by A.thaliana KIN10.

Its subcellular location is the host nucleus. The protein resides in the host cytoplasm. In terms of biological role, strong activator of the late viral genes promoters. Enhances the expression of the capsid protein and nuclear shuttle protein. Acts as a suppressor of RNA-mediated gene silencing, also known as post-transcriptional gene silencing (PTGS), a mechanism of plant viral defense that limits the accumulation of viral RNAs. Suppresses the host RNA silencing by inhibiting adenosine kinase 2 (ADK2), a kinase involved in a general methylation pathway. Also suppresses the host basal defense by interacting with and inhibiting SNF1 kinase, a key regulator of cell metabolism implicated in innate antiviral defense. Determines pathogenicity. The chain is Transcriptional activator protein from Cabbage leaf curl virus (isolate Jamaica) (CaLCuV).